The primary structure comprises 311 residues: MERPTGVYFQTMTMKQIRERLKQCDLIIIPVGSTENHGPNAPTGEDTFLVTRMAEQVALKTGCTVAEPIWYGYHPYHHIGMPGTVPVKDEAFIDYLVSVIAGFWNTGFRKQILLNGHGQEFVIPIAIHKFAKIFQVPAIIINLNWYHAIQDKFKTKEEGGPYETPFIHADEVETSWSLALFPEFMHQEWAVDTEPKGFLPEGHIDKAGNLLHRPIAWYGHVGGGPIEVVAYPEGVVGKATLASAEKAKEGVEALLDYLEKLVRDIMERFPAGKLPPAEMLSQRPKEELEALTKEPLTEGWRNLYTAGNLWG.

Zn(2+) is bound by residues Glu35, His37, Asp46, His117, and Glu173.

It belongs to the creatininase superfamily. As to quaternary structure, homotrimer. It depends on Zn(2+) as a cofactor.

The catalysed reaction is 3-dehydro-scyllo-inosose + H2O = 5-dehydro-L-gluconate + H(+). Its pathway is polyol metabolism; myo-inositol metabolism. Catalyzes the ring-opening hydrolysis of 3-dehydro-scyllo-inosose (diketo-inositol) to 5-dehydro-L-gluconate, and thus probably functions in a myo-inositol degradation pathway together with IolG, IolM and IolO. This chain is 3-dehydro-scyllo-inosose hydrolase, found in Thermotoga maritima (strain ATCC 43589 / DSM 3109 / JCM 10099 / NBRC 100826 / MSB8).